A 387-amino-acid chain; its full sequence is Putative 8-amino-7-oxononanoate synthase (387 aa).

Substrate is bound at residue Arg-19. 107–108 (GY) serves as a coordination point for pyridoxal 5'-phosphate. His-132 provides a ligand contact to substrate. Pyridoxal 5'-phosphate contacts are provided by residues Ser-180, 206-209 (DEAH), and 237-240 (TFGK). At Lys-240 the chain carries N6-(pyridoxal phosphate)lysine. Thr-354 provides a ligand contact to substrate.

The protein belongs to the class-II pyridoxal-phosphate-dependent aminotransferase family. BioF subfamily. As to quaternary structure, homodimer. The cofactor is pyridoxal 5'-phosphate.

It catalyses the reaction 6-carboxyhexanoyl-[ACP] + L-alanine + H(+) = (8S)-8-amino-7-oxononanoate + holo-[ACP] + CO2. Its pathway is cofactor biosynthesis; biotin biosynthesis. Functionally, catalyzes the decarboxylative condensation of pimeloyl-[acyl-carrier protein] and L-alanine to produce 8-amino-7-oxononanoate (AON), [acyl-carrier protein], and carbon dioxide. This is Putative 8-amino-7-oxononanoate synthase (bioF) from Pasteurella multocida (strain Pm70).